The following is a 538-amino-acid chain: Sterile alpha motif domain-containing protein 1 (538 aa).

Residues 1 to 11 are compositionally biased toward pro residues; it reads MAGPPALPPPE. 2 disordered regions span residues 1–30 and 92–247; these read MAGP…ASPH and SYRN…GAAR. Positions 12–29 are enriched in low complexity; that stretch reads TAAAATTAAAASSSAASP. In terms of domain architecture, SAMD1-like winged helix (WH) spans 23–99; the sequence is SSSAASPHYQ…SISYRNAARV (77 aa). Thr107 carries the post-translational modification Phosphothreonine. The segment covering 115–125 has biased composition (low complexity); sequence PRGAPAAAAAA. Over residues 126 to 139 the composition is skewed to pro residues; sequence APPPTPAPPPPPAP. Positions 140-158 are enriched in low complexity; that stretch reads VAAAAPARAPRAAAAAATA. The residue at position 161 (Ser161) is a Phosphoserine. Positions 168–177 are enriched in low complexity; it reads GPRAQRAAPL. Residues 178–236 are compositionally biased toward pro residues; it reads AAPPPAPAAPPAVAPPAGPRRAPPPAVAAREPPLPPPPQPPAPPQQQQPPPPQPQPPPE. Positions 237-247 are enriched in low complexity; the sequence is GGAVRAGGAAR. Ser261 carries the post-translational modification Phosphoserine. Over residues 282 to 291 the composition is skewed to basic and acidic residues; the sequence is AARGRLERTR. Positions 282–458 are disordered; the sequence is AARGRLERTR…PPGRKEKPSD (177 aa). The span at 328–351 shows a compositional bias: acidic residues; that stretch reads KEEEEDDDEDEDEEDDVSEGSEVP. The span at 425–436 shows a compositional bias: pro residues; sequence SPSPVPLPPGKP. The region spanning 462 to 530 is the SAM domain; that stretch reads WTVMDVVEYF…KVLQQGHFED (69 aa).

Homopolymerize into a closed pentameric ring. Interacts (via SAM domain) with L3MBTL3 (via SAM domain); the interaction mediates L3MBTL3 binding to chromatin. Interacts (via WH domain) with KDM1A; the interaction modulates KDM1A function. As to expression, expressed in atherosclerotic lesions, not in normal intima. Expressed in foam cells.

The protein resides in the nucleus. It is found in the chromosome. The protein localises to the secreted. Unmethylated CpG islands (CGIs)-binding protein which localizes to H3K4me3-decorated CGIs, where it acts as a transcriptional repressor. Tethers L3MBTL3 to chromatin and interacts with the KDM1A histone demethylase complex to modulate H3K4me2 and H3K4me3 levels at CGIs. Plays a role in atherogenesis by binding with LDL on cell surface and promoting LDL oxidation which leads to the formation of foam cell. The polypeptide is Sterile alpha motif domain-containing protein 1 (Homo sapiens (Human)).